Here is a 728-residue protein sequence, read N- to C-terminus: MDKETIKAHKISDEEYTQILEILGREPNLLELGVISAMWSEHCSYKSSKKYLNGFPTKAPWVIQGPGENAGVIDIGQGMAAVFKVESHNHPSFIEPFAGAATGVGGILRDVFTMGARVVAGLNSLKFGNIHNEKCSKHQKYLVKGVVNGISHYGNCMGVPTIGGECAFDECFNGNILVNAFALGVCKSEDIFYAKAEGVGNPVIYVGSKTGRDGLGGAVMASDSFNEESKSLRPTVQIGDPFSEKLLMEACLELFKTDYIVGIQDMGAAGLTSSSFEMAGRSGSGMKLYLDKTPIRESGMTPYELMLSESQERMLICAKKGYEDKVIEIFKKWDLDAVVIGEVTNTGKMELFWHDELVGLIPIEPLSEKAPILSRPISEPKYLSEIKDYKFELKLSIQELFIQMLQNENINNKAFIYDQFDSSVQTNTIKADGRLGASAIRIKENGASVAMAIECNSRLNYVNPKIGAALAVASAGRKVACTGAKPLAISDCLNYGNPQNPEVMWQFAQGCEGIKEACKELNTPVVSGNVSLYNETEGVSIYPSPTIVSVGVLEDANKTLKASFEKENLSVYLLGESLGEFGGSMVMKIQDKKVSGSLKELDYKAEIALWDLLYKANQNSLLECANSVGIGGIAMTLAKMFAISSVGANLTSGFDDEKMIFDESASRAIVGLSKENEEAFLNLAKEFGVKAYKLGVSTSQKHFKLDSIELSKAELDKLYFESFKEQIQ.

Residue histidine 42 is part of the active site. Residues tyrosine 45 and lysine 84 each contribute to the ATP site. Position 86 (glutamate 86) interacts with Mg(2+). Residues 87-90 and arginine 109 each bind substrate; that span reads SHNH. Residue histidine 88 is the Proton acceptor of the active site. Residue aspartate 110 coordinates Mg(2+). Substrate is bound at residue glutamine 237. Residue aspartate 265 coordinates Mg(2+). 309–311 provides a ligand contact to substrate; sequence ESQ. The ATP site is built by aspartate 491 and glycine 528. Asparagine 529 contributes to the Mg(2+) binding site. Serine 531 contacts substrate.

This sequence belongs to the FGAMS family. As to quaternary structure, monomer. Part of the FGAM synthase complex composed of 1 PurL, 1 PurQ and 2 PurS subunits.

It localises to the cytoplasm. The catalysed reaction is N(2)-formyl-N(1)-(5-phospho-beta-D-ribosyl)glycinamide + L-glutamine + ATP + H2O = 2-formamido-N(1)-(5-O-phospho-beta-D-ribosyl)acetamidine + L-glutamate + ADP + phosphate + H(+). It participates in purine metabolism; IMP biosynthesis via de novo pathway; 5-amino-1-(5-phospho-D-ribosyl)imidazole from N(2)-formyl-N(1)-(5-phospho-D-ribosyl)glycinamide: step 1/2. Its function is as follows. Part of the phosphoribosylformylglycinamidine synthase complex involved in the purines biosynthetic pathway. Catalyzes the ATP-dependent conversion of formylglycinamide ribonucleotide (FGAR) and glutamine to yield formylglycinamidine ribonucleotide (FGAM) and glutamate. The FGAM synthase complex is composed of three subunits. PurQ produces an ammonia molecule by converting glutamine to glutamate. PurL transfers the ammonia molecule to FGAR to form FGAM in an ATP-dependent manner. PurS interacts with PurQ and PurL and is thought to assist in the transfer of the ammonia molecule from PurQ to PurL. The polypeptide is Phosphoribosylformylglycinamidine synthase subunit PurL (Campylobacter jejuni (strain RM1221)).